The chain runs to 256 residues: MLHIADKTFDSHLFTGTGKFASSQLMVESIRASGSQLVTLAMKRVDLRQHNDAILEPLIAAGVTLLPNTSGAKTAEEAIFAAHLAREALGTNWLKLEIHPDARWLLPDPIETLKAAETLVQQGFVVLPYCGADPVLCKRLEEVGCAAVMPLGAPIGSNQGLETRAMLEIIIQQATVPVVVDAGIGVPSHAAQALEMGANAVLVNTAIAVADDPVNMAKAFRLAVEAGLLARQAGPGSRSHFAHATSPLTEFLEASA.

Lysine 95 serves as the catalytic Schiff-base intermediate with DXP. Residues glycine 156, 182–183 (AG), and 204–205 (NT) contribute to the 1-deoxy-D-xylulose 5-phosphate site.

This sequence belongs to the ThiG family. Homotetramer. Forms heterodimers with either ThiH or ThiS.

The protein resides in the cytoplasm. It catalyses the reaction [ThiS sulfur-carrier protein]-C-terminal-Gly-aminoethanethioate + 2-iminoacetate + 1-deoxy-D-xylulose 5-phosphate = [ThiS sulfur-carrier protein]-C-terminal Gly-Gly + 2-[(2R,5Z)-2-carboxy-4-methylthiazol-5(2H)-ylidene]ethyl phosphate + 2 H2O + H(+). It functions in the pathway cofactor biosynthesis; thiamine diphosphate biosynthesis. Functionally, catalyzes the rearrangement of 1-deoxy-D-xylulose 5-phosphate (DXP) to produce the thiazole phosphate moiety of thiamine. Sulfur is provided by the thiocarboxylate moiety of the carrier protein ThiS. In vitro, sulfur can be provided by H(2)S. This chain is Thiazole synthase, found in Escherichia coli O6:H1 (strain CFT073 / ATCC 700928 / UPEC).